Here is a 261-residue protein sequence, read N- to C-terminus: Probable membrane transporter protein ORF9 (261 aa).

8 helical membrane-spanning segments follow: residues 8 to 28 (LLAFLFVAAFIAGFIDSIAGG), 29 to 49 (GGMITIPAMLIAGIPPLQTLG), 78 to 98 (LPMALMSAAGAVLGALLATIV), 100 to 120 (GDVLKAILPFLLIAIALYFGL), 133 to 151 (VTPFVFTLTLVPLIGFYDG), 152 to 171 (VFGPGTGSFFMLGFVTLAGF), 189 to 209 (VGAFGVFLFFGAVLWKVGLLM), and 231 to 251 (IIKPLLVIVSIALAIRLLADP).

It belongs to the 4-toluene sulfonate uptake permease (TSUP) (TC 2.A.102) family.

It is found in the cell membrane. This chain is Probable membrane transporter protein ORF9, found in Sinorhizobium sp.